The following is an 86-amino-acid chain: U18-theraphotoxin-Cg1a (86 aa).

The signal sequence occupies residues Lys-1–Ala-20. The propeptide occupies Ala-21–Arg-49. 3 disulfides stabilise this stretch: Cys-51–Cys-65, Cys-58–Cys-70, and Cys-64–Cys-78. The residue at position 84 (Phe-84) is a Phenylalanine amide.

It belongs to the neurotoxin 10 (Hwtx-1) family. 47 subfamily. Expressed by the venom gland.

Its subcellular location is the secreted. Its function is as follows. Inhibits TTX-sensitive and TTX-insensitive sodium currents (IC(50) is 0.6 uM and 0.95 uM respectively) on rat dorsal root ganglion (DRG) neurons. Inhibits muscular subtypes sodium channels Nav1.4/SCN4A and Nav1.5/SCN5A transiently transfected in to HEK293 cells (IC(50) is 5.42 uM and 0.45 uM respectively). Also blocks Kv2.1/KCNB1 potassium channels expressed in X.laevis oocytes with an IC(50) of 604 nM. Injection of the toxin in mice was immediately followed by general ataxia, lack of response to stimuli and semiparalysis. The protein is U18-theraphotoxin-Cg1a of Chilobrachys guangxiensis (Chinese earth tiger tarantula).